Here is a 531-residue protein sequence, read N- to C-terminus: Peptide chain release factor 3 (531 aa).

One can recognise a tr-type G domain in the interval 13-282 (AKRRTFAIIS…TLIKYSPPPK (270 aa)). Residues 22–29 (SHPDAGKT), 90–94 (DTPGH), and 144–147 (NKLD) each bind GTP.

This sequence belongs to the TRAFAC class translation factor GTPase superfamily. Classic translation factor GTPase family. PrfC subfamily.

The protein resides in the cytoplasm. Its function is as follows. Increases the formation of ribosomal termination complexes and stimulates activities of RF-1 and RF-2. It binds guanine nucleotides and has strong preference for UGA stop codons. It may interact directly with the ribosome. The stimulation of RF-1 and RF-2 is significantly reduced by GTP and GDP, but not by GMP. This Psychrobacter arcticus (strain DSM 17307 / VKM B-2377 / 273-4) protein is Peptide chain release factor 3.